Reading from the N-terminus, the 505-residue chain is Deoxyguanosinetriphosphate triphosphohydrolase (505 aa).

Positions 66 to 273 (RLTHSMEVQQ…MEAADDISYC (208 aa)) constitute an HD domain.

This sequence belongs to the dGTPase family. Type 1 subfamily. As to quaternary structure, homotetramer. Requires Mg(2+) as cofactor.

The enzyme catalyses dGTP + H2O = 2'-deoxyguanosine + triphosphate + H(+). DGTPase preferentially hydrolyzes dGTP over the other canonical NTPs. The chain is Deoxyguanosinetriphosphate triphosphohydrolase from Serratia proteamaculans (strain 568).